Consider the following 92-residue polypeptide: Large ribosomal subunit protein eL43 (92 aa).

Cysteine 39, cysteine 42, cysteine 57, and cysteine 60 together coordinate Zn(2+). The C4-type zinc-finger motif lies at 39-60 (CSFCGKTKMKRRAVGIWHCGSC).

The protein belongs to the eukaryotic ribosomal protein eL43 family. In terms of assembly, component of the large ribosomal subunit.

It is found in the cytoplasm. Functionally, component of the large ribosomal subunit. The ribosome is a large ribonucleoprotein complex responsible for the synthesis of proteins in the cell. The sequence is that of Large ribosomal subunit protein eL43 (Rpl37a) from Mus musculus (Mouse).